We begin with the raw amino-acid sequence, 360 residues long: MVGRKIIHVDMDAFYASVEQRDRPHLKGVPVIVGGPPHARGVVATCSYEARKYGIHSAMPSRRAFQLCPRAVFVRPRFEVYRAVSAQIMELFLEVTPLVEPLSLDEAYLDVTENNLQMTSATHIAQYILAEIKRRTGLTASAGVSNSKLVAKIASGHQKPNGLTVLPPDAVLPFLSGLKIGDLHGVGKVTEQTLQKHGFNTVADIQQSPIAELRGLLGRDRGTELYTMAHGEDERMVRPHRERKSIGSESTFEEDTEDIDTIFETLKREALSVVKTLNQKELVCRTVTIKWKTEDFQSRSKRYTFLEETADEDTLLRVTTKLFNEIEFSGPIRLIGMSVSHLEAPPLSKQLTWQDIDSYL.

The UmuC domain maps to 6 to 187 (IIHVDMDAFY…LKIGDLHGVG (182 aa)). Positions 10 and 105 each coordinate Mg(2+). Glu106 is a catalytic residue.

It belongs to the DNA polymerase type-Y family. As to quaternary structure, monomer. Mg(2+) is required as a cofactor.

It is found in the cytoplasm. It catalyses the reaction DNA(n) + a 2'-deoxyribonucleoside 5'-triphosphate = DNA(n+1) + diphosphate. Functionally, poorly processive, error-prone DNA polymerase involved in untargeted mutagenesis. Copies undamaged DNA at stalled replication forks, which arise in vivo from mismatched or misaligned primer ends. These misaligned primers can be extended by PolIV. Exhibits no 3'-5' exonuclease (proofreading) activity. May be involved in translesional synthesis, in conjunction with the beta clamp from PolIII. This chain is DNA polymerase IV, found in Exiguobacterium sibiricum (strain DSM 17290 / CCUG 55495 / CIP 109462 / JCM 13490 / 255-15).